The chain runs to 152 residues: SsrA-binding protein (152 aa).

The protein belongs to the SmpB family.

The protein localises to the cytoplasm. In terms of biological role, required for rescue of stalled ribosomes mediated by trans-translation. Binds to transfer-messenger RNA (tmRNA), required for stable association of tmRNA with ribosomes. tmRNA and SmpB together mimic tRNA shape, replacing the anticodon stem-loop with SmpB. tmRNA is encoded by the ssrA gene; the 2 termini fold to resemble tRNA(Ala) and it encodes a 'tag peptide', a short internal open reading frame. During trans-translation Ala-aminoacylated tmRNA acts like a tRNA, entering the A-site of stalled ribosomes, displacing the stalled mRNA. The ribosome then switches to translate the ORF on the tmRNA; the nascent peptide is terminated with the 'tag peptide' encoded by the tmRNA and targeted for degradation. The ribosome is freed to recommence translation, which seems to be the essential function of trans-translation. The polypeptide is SsrA-binding protein (Rickettsia conorii (strain ATCC VR-613 / Malish 7)).